The sequence spans 892 residues: Putative GTP diphosphokinase RSH1, chloroplastic (892 aa).

The transit peptide at 1-52 (MQPPTGAVSGSSSSSLECVSSCRTSWRGGGRPYECSVLSCAWNAPRALTGAL) directs the protein to the chloroplast. The HD domain occupies 184–291 (FIIHPVEVAR…VKLADRLHNM (108 aa)). The TGS domain maps to 574–637 (LGSRVFVFTP…ANAEVVEIII (64 aa)). Positions 809–880 (WLCIVCVDRK…MILGVLGWSV (72 aa)) constitute an ACT domain.

It belongs to the RelA/SpoT family.

The protein resides in the plastid. It is found in the chloroplast. The enzyme catalyses GTP + ATP = guanosine 3'-diphosphate 5'-triphosphate + AMP. In terms of biological role, may be involved in a rapid plant ppGpp (guanosine 3'-diphosphate 5'-diphosphate)-mediated response to pathogens and other stresses. The protein is Putative GTP diphosphokinase RSH1, chloroplastic (RSH1) of Oryza sativa subsp. japonica (Rice).